The primary structure comprises 181 residues: Protein Syd (181 aa).

The protein belongs to the Syd family.

The protein localises to the cell inner membrane. Functionally, interacts with the SecY protein in vivo. May bind preferentially to an uncomplexed state of SecY, thus functioning either as a chelating agent for excess SecY in the cell or as a regulatory factor that negatively controls the translocase function. This is Protein Syd from Klebsiella pneumoniae subsp. pneumoniae (strain ATCC 700721 / MGH 78578).